The chain runs to 327 residues: Eukaryotic translation initiation factor 3 subunit I (327 aa).

WD repeat units follow at residues 8-49, 51-89, 188-227, 229-268, and 285-324; these read GHER…GSYD, HNGA…CLYT, VHRY…KLKQ, KSER…GHFE, and GHFG…LGFT.

This sequence belongs to the eIF-3 subunit I family. Component of the eukaryotic translation initiation factor 3 (eIF-3) complex.

The protein resides in the cytoplasm. In terms of biological role, component of the eukaryotic translation initiation factor 3 (eIF-3) complex, which is involved in protein synthesis of a specialized repertoire of mRNAs and, together with other initiation factors, stimulates binding of mRNA and methionyl-tRNAi to the 40S ribosome. The eIF-3 complex specifically targets and initiates translation of a subset of mRNAs involved in cell proliferation. The protein is Eukaryotic translation initiation factor 3 subunit I of Caenorhabditis elegans.